The following is a 362-amino-acid chain: UDP-N-acetylglucosamine--N-acetylmuramyl-(pentapeptide) pyrophosphoryl-undecaprenol N-acetylglucosamine transferase (362 aa).

Residues 15–17, asparagine 127, arginine 165, serine 191, isoleucine 247, 266–271, and glutamine 292 contribute to the UDP-N-acetyl-alpha-D-glucosamine site; these read TGG and ALTVSE.

The protein belongs to the glycosyltransferase 28 family. MurG subfamily.

The protein localises to the cell inner membrane. It carries out the reaction di-trans,octa-cis-undecaprenyl diphospho-N-acetyl-alpha-D-muramoyl-L-alanyl-D-glutamyl-meso-2,6-diaminopimeloyl-D-alanyl-D-alanine + UDP-N-acetyl-alpha-D-glucosamine = di-trans,octa-cis-undecaprenyl diphospho-[N-acetyl-alpha-D-glucosaminyl-(1-&gt;4)]-N-acetyl-alpha-D-muramoyl-L-alanyl-D-glutamyl-meso-2,6-diaminopimeloyl-D-alanyl-D-alanine + UDP + H(+). It functions in the pathway cell wall biogenesis; peptidoglycan biosynthesis. In terms of biological role, cell wall formation. Catalyzes the transfer of a GlcNAc subunit on undecaprenyl-pyrophosphoryl-MurNAc-pentapeptide (lipid intermediate I) to form undecaprenyl-pyrophosphoryl-MurNAc-(pentapeptide)GlcNAc (lipid intermediate II). The protein is UDP-N-acetylglucosamine--N-acetylmuramyl-(pentapeptide) pyrophosphoryl-undecaprenol N-acetylglucosamine transferase of Shewanella baltica (strain OS223).